The sequence spans 236 residues: MTRRYWNINLEEMMEAGVHFGHGTRKWNPRMAPYISAKRKGIHITNLTRTARFLSEACDLVFDAASRGKQFLIVGTKNKAADSVARAAIKARCHYVNKKWLGGMSTNWSTTETRLHKFRDLRTEQKTGRLNRLPKRDAAMLKRQLSHLQTYLGGIKYMTGLPDIVIIVDQQEEYTALRECITLGIPTICLIDTNCDPDLADISIPANDDAIASIRLILNKLVFAICEGRSSYIRNP.

Belongs to the universal ribosomal protein uS2 family.

It localises to the plastid. The protein localises to the chloroplast. In Vitis vinifera (Grape), this protein is Small ribosomal subunit protein uS2c (rps2).